A 310-amino-acid chain; its full sequence is Nodulation protein D 2 (310 aa).

In terms of domain architecture, HTH lysR-type spans 6–63 (LDLNLLVALDALMTERKLTAAARRVKLSQPAMSAAIARLRTYFGDELFSMQGRELIPT). The H-T-H motif DNA-binding region spans 23 to 42 (LTAAARRVKLSQPAMSAAIA).

The protein belongs to the LysR transcriptional regulatory family.

Functionally, nodD regulates the expression of the nodABCFE genes which encode other nodulation proteins. NodD is also a negative regulator of its own expression. Binds flavonoids as inducers. This Rhizobium meliloti (strain 1021) (Ensifer meliloti) protein is Nodulation protein D 2 (nodD2).